The sequence spans 282 residues: Cuticle collagen 8 (282 aa).

Positions 1-24 (MLVCVFVALYTMMGLLTDIKQLQS) are cleaved as a signal peptide. Residues 86–282 (GPKSEGCPAG…CPCPGRSYKA (197 aa)) form a disordered region. 2 triple-helical region regions span residues 95–124 (GPPG…PGVI) and 141–269 (GRPG…PGPD). A compositionally biased stretch (gly residues) spans 170–180 (TGGQGGPGEQG). The span at 214-224 (PPGPRGPPGPE) shows a compositional bias: pro residues. Over residues 225–234 (GNPGGAGEDG) the composition is skewed to gly residues. The span at 235 to 244 (NQGPVGHPGV) shows a compositional bias: low complexity.

Belongs to the cuticular collagen family. Collagen polypeptide chains are complexed within the cuticle by disulfide bonds and other types of covalent cross-links.

In terms of biological role, nematode cuticles are composed largely of collagen-like proteins. The cuticle functions both as an exoskeleton and as a barrier to protect the worm from its environment. The sequence is that of Cuticle collagen 8 (col-8) from Caenorhabditis elegans.